Consider the following 1222-residue polypeptide: Kinesin-related protein 9 (1222 aa).

Positions 1–25 (MDNNNNNFSTPKQPTINSTTGGQLR) are enriched in polar residues. 3 disordered regions span residues 1–55 (MDNN…ITNS), 75–165 (MDSL…STNI), and 188–343 (SSNT…TQPL). Low complexity predominate over residues 26–55 (SRSNSSPSTSSISTPRNGSTTATTSSITNS). Polar residues predominate over residues 75 to 85 (MDSLSTPMSQS). Low complexity-rich tracts occupy residues 122–165 (SFIS…STNI), 194–209 (SSLPSSTNNGNNPLSN), 216–238 (NHHLVNSNSSTSTPSPTMFISTT), and 254–325 (NLTT…RTPI). Over residues 326–343 (QNFNSVGGVNITSKTQPL) the composition is skewed to polar residues. The 370-residue stretch at 350-719 (SIQAVCRFRP…LNFGQRAQSV (370 aa)) folds into the Kinesin motor domain. 438-445 (GQTGAGKT) is an ATP binding site. A coiled-coil region spans residues 724–1026 (LQNVEESHSE…DTLTNKLEIQ (303 aa)). The segment at 1144–1174 (NINNNNNIKNNNNNNKLKSKKVGSSSSSSSN) is disordered. The chain crosses the membrane as a helical span at residues 1183–1203 (ILFFLIILVILFFLMVAVGLT).

The protein belongs to the TRAFAC class myosin-kinesin ATPase superfamily. Kinesin family.

The protein localises to the membrane. It is found in the cytoplasm. It localises to the cytoskeleton. Its function is as follows. Microtubule-associated force-producing protein that plays a role in organelle transport. Its motor activity is directed toward the microtubule's plus end. In Dictyostelium discoideum (Social amoeba), this protein is Kinesin-related protein 9 (kif9).